The following is a 553-amino-acid chain: Ubiquitin carboxyl-terminal hydrolase 17-like protein 15 (553 aa).

A USP domain is found at 80–375; that stretch reads AGLQNMGNTC…QAYVLFYIQK (296 aa). The active-site Nucleophile is the Cys89. His334 functions as the Proton acceptor in the catalytic mechanism. Composition is skewed to basic and acidic residues over residues 382 to 392 and 398 to 413; these read SESVSRGREPR and DTDR…RDHP. Disordered regions lie at residues 382 to 413 and 491 to 524; these read SESV…RDHP and STTP…HSKR. Residues 496–505 are compositionally biased toward polar residues; it reads HQESMNTGTL. Over residues 510–524 the composition is skewed to basic residues; the sequence is GRARRSKGKNKHSKR.

The protein belongs to the peptidase C19 family. USP17 subfamily.

Its subcellular location is the nucleus. The protein resides in the endoplasmic reticulum. The catalysed reaction is Thiol-dependent hydrolysis of ester, thioester, amide, peptide and isopeptide bonds formed by the C-terminal Gly of ubiquitin (a 76-residue protein attached to proteins as an intracellular targeting signal).. Functionally, deubiquitinating enzyme that removes conjugated ubiquitin from specific proteins to regulate different cellular processes that may include cell proliferation, progression through the cell cycle, apoptosis, cell migration, and the cellular response to viral infection. The protein is Ubiquitin carboxyl-terminal hydrolase 17-like protein 15 (USP17L15) of Homo sapiens (Human).